The following is a 701-amino-acid chain: MSQFVLEIGFEELPSRFLPGLERELAERFARALDDDGVEHESIRVLTTPRRAAVLIEGINPVQREAEEVVPGPPVRVAFDAEGKPTKAAEGFARTQGVDMADIFTLSTDKGEYIAVRKRTGGANAADLIATACPTVVAALPFPKRMRWGSGDFTFGRPLRWLLALFDDAVVPFEVGGVVSGGVTWGHRIHGAGPLVVKSADDYLNVVIEKGGVTPDPAERRAMILAGGNAAAEAAGGRILWKESLLDEVQGLAEHPVPLLGDIDPSFLELPREVLLTSMESHQKSFGVEGPDGALLPHFLTVLNLTPLDVALVKKGWERVLRARLEDGRFFWKTDLAASFDAWLAELDNVIFLGPLGSMGDKTRRLEKLCAWLAKAAGVADESACARAGRLSKADLVSEMVGEFDTLQGIMGGIYARRMGEPETVAAALAEQYLPAGPDSPVPATLAGALLSIADKADTMAGCFGLGMIPTGAADPYALRRCALGIARIVLEHGLRIDVRELFRTALALYGERAWKLAPAEALVKLEEFFMARLKNHFMAAGHETLLVEAALAADTPEGAGIDVRAAGARLAALSDFSRRDDFGSAVLTFKRAANIIRKQGQEGGAVLDGAYSHALLAEDAEKALAARLEEVAPRFDALWAADDFASLFGLLGELRPAVDAFFDGVMVMCDDAAVRTNRLNLLKALTLRLGRLADFGALQM.

The protein belongs to the class-II aminoacyl-tRNA synthetase family. As to quaternary structure, tetramer of two alpha and two beta subunits.

The protein localises to the cytoplasm. It carries out the reaction tRNA(Gly) + glycine + ATP = glycyl-tRNA(Gly) + AMP + diphosphate. The sequence is that of Glycine--tRNA ligase beta subunit from Nitratidesulfovibrio vulgaris (strain DSM 19637 / Miyazaki F) (Desulfovibrio vulgaris).